A 290-amino-acid polypeptide reads, in one-letter code: Short chain dehydrogenase andI (290 aa).

NADP(+) contacts are provided by I35, N120, R154, Y186, K190, V219, and T221. Residue Y186 is the Proton acceptor of the active site. The Lowers pKa of active site Tyr role is filled by K190.

It belongs to the short-chain dehydrogenases/reductases (SDR) family.

The protein operates within secondary metabolite biosynthesis; terpenoid biosynthesis. Functionally, short chain dehydrogenase; part of the gene cluster that mediates the biosynthesis of anditomin, a fungal meroterpenoid. The first step of the pathway is the synthesis of 3,5-dimethylorsellinic acid (DMOA) by the polyketide synthase andM. DMOA is then converted to the phthalide compound 5,7-dihydroxy-4,6-dimethylphthalide (DHDMP) by the cytochrome P450 monooxygenase andK, which is further prenylated by the prenyltransferase andD to yield farnesyl-DHDMP. Further epoxidation by the FAD-dependent monooxygenase andE leads to epoxyfarnesyl-DHDMP. The next step involves the terpene cyclase andB that converts epoxyfarnesyl-DHDMP into preandiloid A through opening of the epoxide ring followed by the cyclization of the farnesyl moiety. Preandiloid A is in turn oxidized at the C-3 hydroxyl group to yield preandiloid B by the dehydrogenase andC. The dioxygenase andA is solely responsible for the dehydrogenation of preandiloid B leading to the enone preandiloid C, as well as for the intriguing structural rearrangement to generate the bicyclo[2.2.2]octane core, transforming preandiloid C into andiconin. FAD-binding monooxygenase andJ then produces andilesin D which is reduced by dehydrogenase andI to yield andilesin A. Action of acetyltransferase andG followed by a spontaneous acetate elimination leads then to andilesin B, which is in turn substrate of the short chain dehydrogenase andH to yield andilesin C. Finally, the dioxygenase andF catalyzes the transformation of andilesin C to anditomin. The chain is Short chain dehydrogenase andI from Emericella variicolor (Aspergillus stellatus).